Here is a 100-residue protein sequence, read N- to C-terminus: Small cysteine and glycine repeat-containing protein 3 (100 aa).

The interval 4-82 (CGCGSCGGCG…RRTCRSCGCG (79 aa)) is 13 X 2 AA repeats of CG.

It belongs to the KRTAP type 28 family.

Its function is as follows. In the hair cortex, hair keratin intermediate filaments are embedded in an interfilamentous matrix, consisting of hair keratin-associated proteins (KRTAP), which are essential for the formation of a rigid and resistant hair shaft through their extensive disulfide bond cross-linking with abundant cysteine residues of hair keratins. The matrix proteins include the high-sulfur and high-glycine-tyrosine keratins. This is Small cysteine and glycine repeat-containing protein 3 from Homo sapiens (Human).